We begin with the raw amino-acid sequence, 208 residues long: Methyl-CpG-binding domain protein 3-like 3 (208 aa).

This sequence belongs to the MBD3L family.

In Homo sapiens (Human), this protein is Methyl-CpG-binding domain protein 3-like 3 (MBD3L3).